Here is a 523-residue protein sequence, read N- to C-terminus: Probable endopeptidase p60 (523 aa).

An N-terminal signal peptide occupies residues 1-27 (MNMKKATIAATAGIAVTAFAAPTIASA). A LysM 1 domain is found at 28 to 71 (STVVVEAGDTLWGIAQDNGTTVDALKKANKLTTDKIVPGQKLQV). Positions 78–142 (KTEKSVSATW…VNGKYLGNAV (65 aa)) constitute an SH3b domain. The interval 146–188 (PSATPEVKQEETTQAAPAQQTKTEVKQATPAATTEKDAVETKT) is disordered. The segment covering 157–167 (TTQAAPAQQTK) has biased composition (low complexity). The region spanning 198–241 (TTHTVKSGDTIWALSVKYGASVQDLMSWNNLSSSSIYVGQNIAV) is the LysM 2 domain. Low complexity-rich tracts occupy residues 251–282 (PKAE…TTTT) and 290–318 (EKQT…TNAS). 2 disordered regions span residues 251-323 (PKAE…YTVK) and 367-408 (ATNT…SSSA). In terms of domain architecture, LysM 3 spans 318 to 361 (SSYTVKSGDTLGKIASTFGTTVSKIKALNGLTSDNLQVGDVLKV). Residues 405–523 (SSSASAIIAE…GQYLVGFGRV (119 aa)) form the NlpC/P60 domain. The active-site Nucleophile is the Cys435. His485 acts as the Proton acceptor in catalysis. Residue Asn497 is part of the active site.

Belongs to the peptidase C40 family.

Its function is as follows. This major extracellular protein may be involved in the invasion of non-professional phagocytic cells by Listeria. The sequence is that of Probable endopeptidase p60 (iap) from Listeria seeligeri.